The following is a 467-amino-acid chain: Siroheme synthase 2 (467 aa).

The tract at residues 1-204 (MDYLPIFCQL…NDVALAERQI (204 aa)) is precorrin-2 dehydrogenase /sirohydrochlorin ferrochelatase. NAD(+) contacts are provided by residues 22 to 23 (EI) and 43 to 44 (CS). At Ser128 the chain carries Phosphoserine. The uroporphyrinogen-III C-methyltransferase stretch occupies residues 216-467 (GEVVLVGAGP…EPSQPLAQMA (252 aa)). Position 225 (Pro225) interacts with S-adenosyl-L-methionine. Residue Asp248 is the Proton acceptor of the active site. Catalysis depends on Lys270, which acts as the Proton donor. S-adenosyl-L-methionine contacts are provided by residues 301-303 (GGD), Ile306, 331-332 (TA), Met382, and Gly411.

In the N-terminal section; belongs to the precorrin-2 dehydrogenase / sirohydrochlorin ferrochelatase family. The protein in the C-terminal section; belongs to the precorrin methyltransferase family.

It catalyses the reaction uroporphyrinogen III + 2 S-adenosyl-L-methionine = precorrin-2 + 2 S-adenosyl-L-homocysteine + H(+). The enzyme catalyses precorrin-2 + NAD(+) = sirohydrochlorin + NADH + 2 H(+). It carries out the reaction siroheme + 2 H(+) = sirohydrochlorin + Fe(2+). It participates in cofactor biosynthesis; adenosylcobalamin biosynthesis; precorrin-2 from uroporphyrinogen III: step 1/1. It functions in the pathway cofactor biosynthesis; adenosylcobalamin biosynthesis; sirohydrochlorin from precorrin-2: step 1/1. Its pathway is porphyrin-containing compound metabolism; siroheme biosynthesis; precorrin-2 from uroporphyrinogen III: step 1/1. The protein operates within porphyrin-containing compound metabolism; siroheme biosynthesis; siroheme from sirohydrochlorin: step 1/1. It participates in porphyrin-containing compound metabolism; siroheme biosynthesis; sirohydrochlorin from precorrin-2: step 1/1. Its function is as follows. Multifunctional enzyme that catalyzes the SAM-dependent methylations of uroporphyrinogen III at position C-2 and C-7 to form precorrin-2 via precorrin-1. Then it catalyzes the NAD-dependent ring dehydrogenation of precorrin-2 to yield sirohydrochlorin. Finally, it catalyzes the ferrochelation of sirohydrochlorin to yield siroheme. This Serratia proteamaculans (strain 568) protein is Siroheme synthase 2.